We begin with the raw amino-acid sequence, 68 residues long: ATP synthase F(0) complex subunit 8 (68 aa).

A helical transmembrane segment spans residues 8-24; sequence VWPTTITPMLLTLFLIT. Lysine 54 bears the N6-acetyllysine; alternate mark. At lysine 54 the chain carries N6-succinyllysine; alternate. An N6-acetyllysine modification is found at lysine 57.

It belongs to the ATPase protein 8 family. Component of the ATP synthase complex composed at least of ATP5F1A/subunit alpha, ATP5F1B/subunit beta, ATP5MC1/subunit c (homooctomer), MT-ATP6/subunit a, MT-ATP8/subunit 8, ATP5ME/subunit e, ATP5MF/subunit f, ATP5MG/subunit g, ATP5MK/subunit k, ATP5MJ/subunit j, ATP5F1C/subunit gamma, ATP5F1D/subunit delta, ATP5F1E/subunit epsilon, ATP5PF/subunit F6, ATP5PB/subunit b, ATP5PD/subunit d, ATP5PO/subunit OSCP. ATP synthase complex consists of a soluble F(1) head domain (subunits alpha(3) and beta(3)) - the catalytic core - and a membrane F(0) domain - the membrane proton channel (subunits c, a, 8, e, f, g, k and j). These two domains are linked by a central stalk (subunits gamma, delta, and epsilon) rotating inside the F1 region and a stationary peripheral stalk (subunits F6, b, d, and OSCP). Interacts with PRICKLE3.

Its subcellular location is the mitochondrion membrane. Functionally, subunit 8, of the mitochondrial membrane ATP synthase complex (F(1)F(0) ATP synthase or Complex V) that produces ATP from ADP in the presence of a proton gradient across the membrane which is generated by electron transport complexes of the respiratory chain. ATP synthase complex consist of a soluble F(1) head domain - the catalytic core - and a membrane F(1) domain - the membrane proton channel. These two domains are linked by a central stalk rotating inside the F(1) region and a stationary peripheral stalk. During catalysis, ATP synthesis in the catalytic domain of F(1) is coupled via a rotary mechanism of the central stalk subunits to proton translocation. In vivo, can only synthesize ATP although its ATP hydrolase activity can be activated artificially in vitro. Part of the complex F(0) domain. The polypeptide is ATP synthase F(0) complex subunit 8 (Pan paniscus (Pygmy chimpanzee)).